A 390-amino-acid chain; its full sequence is GTPase Obg (390 aa).

The 159-residue stretch at 1 to 159 folds into the Obg domain; it reads MKFVDEAAIL…RELMLELLLL (159 aa). Residues 160-333 enclose the OBG-type G domain; the sequence is ADVGMLGLPN…LCWDVMSFLN (174 aa). GTP is bound by residues 166-173, 191-195, 213-216, 283-286, and 314-316; these read GLPNAGKS, FTTLI, DIPG, NKID, and SAA. Positions 173 and 193 each coordinate Mg(2+). Acidic residues predominate over residues 364–384; it reads VEAEAEDDWDDDWDEEDDDGV. Positions 364 to 390 are disordered; the sequence is VEAEAEDDWDDDWDEEDDDGVEIIYER.

The protein belongs to the TRAFAC class OBG-HflX-like GTPase superfamily. OBG GTPase family. Monomer. Mg(2+) is required as a cofactor.

It localises to the cytoplasm. Its function is as follows. An essential GTPase which binds GTP, GDP and possibly (p)ppGpp with moderate affinity, with high nucleotide exchange rates and a fairly low GTP hydrolysis rate. Plays a role in control of the cell cycle, stress response, ribosome biogenesis and in those bacteria that undergo differentiation, in morphogenesis control. The sequence is that of GTPase Obg from Yersinia pestis.